Here is a 341-residue protein sequence, read N- to C-terminus: Cysteine-rich repeat secretory protein 1 (341 aa).

An N-terminal signal peptide occupies residues 1–25 (MFSLPLHQSKLIFLLSFLLIKTLNA). Gnk2-homologous domains lie at 28–131 (TYLL…SRKI) and 136–245 (DQGP…ATFL). 4 disulfides stabilise this stretch: Cys-85-Cys-94, Cys-97-Cys-122, Cys-199-Cys-208, and Cys-211-Cys-236. Over residues 247 to 262 (PPPPPPPPPPPPPPPQ) the composition is skewed to pro residues. Positions 247-274 (PPPPPPPPPPPPPPPQRLYGENDTPSSD) are disordered.

Belongs to the cysteine-rich repeat secretory protein family.

The protein localises to the secreted. The sequence is that of Cysteine-rich repeat secretory protein 1 (CRRSP1) from Arabidopsis thaliana (Mouse-ear cress).